We begin with the raw amino-acid sequence, 974 residues long: Ovochymase-2 (974 aa).

The N-terminal stretch at 1-21 (MAETSIFPIMMLTVMIGVGRG) is a signal peptide. A propeptide spans 22 to 49 (VTDSPGRVSRCGERPAANTSVSYGLLSR) (activation peptide). Asn-39 carries N-linked (GlcNAc...) asparagine glycosylation. Residues 50 to 299 (IVGGTSAVKG…LLNWLSENLN (250 aa)) enclose the Peptidase S1 1 domain. Cys-75 and Cys-91 form a disulfide bridge. The active-site Charge relay system is His-90. The Ca(2+) site is built by Val-112 and Glu-117. The Charge relay system role is filled by Asp-140. 11 cysteine pairs are disulfide-bonded: Cys-174–Cys-244, Cys-205–Cys-223, Cys-234–Cys-263, Cys-312–Cys-342, Cys-369–Cys-388, Cys-435–Cys-462, Cys-489–Cys-510, Cys-615–Cys-631, Cys-713–Cys-776, Cys-741–Cys-754, and Cys-766–Cys-795. Ser-238 functions as the Charge relay system in the catalytic mechanism. 2 CUB domains span residues 312 to 425 (CSTN…YEAV) and 435 to 547 (CGSV…ISFV). The 230-residue stretch at 590–819 (LIKAEEAMPN…FIPWIMETIL (230 aa)) folds into the Peptidase S1 2 domain. Residues 590-974 (LIKAEEAMPN…WLSYSFHNQN (385 aa)) constitute a propeptide, activation peptide. Asn-763 carries N-linked (GlcNAc...) asparagine glycosylation. Residues 830-858 (EPHHPLFPPDKPSQQKALLPDSPPSSSSQ) are disordered. A glycan (N-linked (GlcNAc...) asparagine) is linked at Asn-926.

Belongs to the peptidase S1 family. In terms of processing, the catalytically inactive 107 kDa form is processed both N- and C-terminally to give rise to the 66 kDa catalytically active form and inactive forms of 82 kDa and 59 kDa. Expressed specifically in the cells lining the bottom of epithelial folds in the oviductal pars recta.

The protein resides in the secreted. The catalysed reaction is Preferential cleavage at 371-Gly-Ser-Arg-|-Trp-374 of glycoprotein gp43 in Xenopus laevis coelemic egg envelope to yield gp41.. In terms of biological role, mediates gamete interaction by affecting the vitelline coat. The polypeptide is Ovochymase-2 (OVCH2) (Bufo japonicus (Japanese common toad)).